The following is a 309-amino-acid chain: Sulfur oxygenase/reductase (309 aa).

Residue Cys-31 is modified to Cysteine persulfide. The Fe cation site is built by His-86, His-90, and Glu-114.

As to quaternary structure, homoicosatetramer. The resulting structure is a hollow sphere where catalysis takes place in the inside cavity. Requires Fe cation as cofactor.

The protein resides in the cytoplasm. The catalysed reaction is 4 sulfur + O2 + 4 H2O = 2 hydrogen sulfide + 2 sulfite + 6 H(+). Its activity is regulated as follows. Inhibited by zinc. Its function is as follows. Catalyzes the simultaneous oxidation and reduction of elemental sulfur in the presence of oxygen, with sulfite and hydrogen sulfide as products. The polypeptide is Sulfur oxygenase/reductase (sor) (Acidianus ambivalens (Desulfurolobus ambivalens)).